The sequence spans 238 residues: Ribonuclease PH (238 aa).

Residues Arg86 and 124-126 (GTR) each bind phosphate.

Belongs to the RNase PH family. As to quaternary structure, homohexameric ring arranged as a trimer of dimers.

The catalysed reaction is tRNA(n+1) + phosphate = tRNA(n) + a ribonucleoside 5'-diphosphate. Phosphorolytic 3'-5' exoribonuclease that plays an important role in tRNA 3'-end maturation. Removes nucleotide residues following the 3'-CCA terminus of tRNAs; can also add nucleotides to the ends of RNA molecules by using nucleoside diphosphates as substrates, but this may not be physiologically important. Probably plays a role in initiation of 16S rRNA degradation (leading to ribosome degradation) during starvation. The sequence is that of Ribonuclease PH from Proteus mirabilis (strain HI4320).